The chain runs to 427 residues: Serine--tRNA ligase (427 aa).

Residue 231–233 coordinates L-serine; it reads TAE. Residue 262–264 coordinates ATP; sequence RSE. E285 provides a ligand contact to L-serine. An ATP-binding site is contributed by 349–352; the sequence is EISS. S385 lines the L-serine pocket.

It belongs to the class-II aminoacyl-tRNA synthetase family. Type-1 seryl-tRNA synthetase subfamily. As to quaternary structure, homodimer. The tRNA molecule binds across the dimer.

The protein resides in the cytoplasm. It carries out the reaction tRNA(Ser) + L-serine + ATP = L-seryl-tRNA(Ser) + AMP + diphosphate + H(+). The enzyme catalyses tRNA(Sec) + L-serine + ATP = L-seryl-tRNA(Sec) + AMP + diphosphate + H(+). It participates in aminoacyl-tRNA biosynthesis; selenocysteinyl-tRNA(Sec) biosynthesis; L-seryl-tRNA(Sec) from L-serine and tRNA(Sec): step 1/1. Functionally, catalyzes the attachment of serine to tRNA(Ser). Is also able to aminoacylate tRNA(Sec) with serine, to form the misacylated tRNA L-seryl-tRNA(Sec), which will be further converted into selenocysteinyl-tRNA(Sec). The protein is Serine--tRNA ligase of Brucella abortus (strain S19).